A 174-amino-acid chain; its full sequence is Streptothricin acetyltransferase (174 aa).

An N-acetyltransferase domain is found at 20–170; that stretch reads FIVREVFDVH…AMYWYWFSGA (151 aa).

Belongs to the acetyltransferase family. GNAT subfamily.

The catalysed reaction is streptothricin F + acetyl-CoA = N(beta)-acetylstreptothricin F + CoA + H(+). Functionally, involved in resistance to streptothricin, a broad-spectrum antibiotic produced by streptomycetes. Detoxifies streptothricin via acetylation of the beta amino group of the first beta-lysyl moiety of streptothricin. This Escherichia coli protein is Streptothricin acetyltransferase (sat-1).